A 96-amino-acid chain; its full sequence is Co-chaperonin GroES (96 aa).

Belongs to the GroES chaperonin family. In terms of assembly, heptamer of 7 subunits arranged in a ring. Interacts with the chaperonin GroEL.

The protein resides in the cytoplasm. Together with the chaperonin GroEL, plays an essential role in assisting protein folding. The GroEL-GroES system forms a nano-cage that allows encapsulation of the non-native substrate proteins and provides a physical environment optimized to promote and accelerate protein folding. GroES binds to the apical surface of the GroEL ring, thereby capping the opening of the GroEL channel. This Ralstonia nicotianae (strain ATCC BAA-1114 / GMI1000) (Ralstonia solanacearum) protein is Co-chaperonin GroES.